The sequence spans 137 residues: Small ribosomal subunit protein uS9c (137 aa).

Belongs to the universal ribosomal protein uS9 family.

It localises to the plastid. The protein resides in the chloroplast. The protein is Small ribosomal subunit protein uS9c (rps9) of Mesostigma viride (Green alga).